Consider the following 464-residue polypeptide: Glutamate--tRNA ligase (464 aa).

The 'HIGH' region motif lies at Pro-9 to Gly-19. The short motif at Lys-242–Arg-246 is the 'KMSKS' region element. Position 245 (Lys-245) interacts with ATP.

Belongs to the class-I aminoacyl-tRNA synthetase family. Glutamate--tRNA ligase type 1 subfamily. Monomer.

It localises to the cytoplasm. The catalysed reaction is tRNA(Glu) + L-glutamate + ATP = L-glutamyl-tRNA(Glu) + AMP + diphosphate. Catalyzes the attachment of glutamate to tRNA(Glu) in a two-step reaction: glutamate is first activated by ATP to form Glu-AMP and then transferred to the acceptor end of tRNA(Glu). The chain is Glutamate--tRNA ligase from Neisseria meningitidis serogroup C / serotype 2a (strain ATCC 700532 / DSM 15464 / FAM18).